The primary structure comprises 195 residues: Achaete-scute homolog 1b (195 aa).

The bHLH domain maps to 66 to 118; it reads MAVARRNERERNRVKQVNMGFQTLRQHVPNGAANKKMSKVETLRSAVEYIRAL. The interval 141–164 is disordered; that stretch reads VSNAYSAGPESPHSAYSSDEGSYE.

In terms of assembly, efficient DNA binding requires dimerization with another bHLH protein. In the 24 hours embryo, expressed in hindbrain close to the anterior and posterior boundaries of rhombomeres 2-6 and in ventral cells close to the floor plate of most rhombomeres. Also expressed in the telencephalon, diencephalon, tegmentum and spinal cord at sites distinct from those expressing ascl1a. Not expressed in the adenohypophysis.

It is found in the nucleus. Its function is as follows. Transcriptional regulator. May mediate transcription activation by binding to the E box-containing promoter. Involved in neurogenesis. Involved in maintaining rhombomere boundaries in the hindbrain, probably via up-regulation of delta expression. May mediate transcription activation by binding to the E box-containing promoter. The sequence is that of Achaete-scute homolog 1b from Danio rerio (Zebrafish).